A 200-amino-acid polypeptide reads, in one-letter code: MKLKTIMSKCEFMIGATHIKSLPDFSIPEIAIAGRSNVGKSSLINAITNNKKNAKTSSKPGCTKQINFYLINKDFMVLVDLPGYGYSKADKTTINNYLCLMEYYLLNSRNLLKVILLIDAKVGFKEIDLDFINWLELHQIHYQLVLTKIDKIKKEMLDVNVNYIKNLNLDFIMYPIISTSSQCKQGIEELIYEIAQCIKK.

The region spanning 26–200 (SIPEIAIAGR…IYEIAQCIKK (175 aa)) is the EngB-type G domain. GTP-binding positions include 34 to 41 (GRSNVGKS), 61 to 65 (GCTKQ), 80 to 83 (DLPG), 147 to 150 (TKID), and 179 to 181 (TSS). Positions 41 and 63 each coordinate Mg(2+).

This sequence belongs to the TRAFAC class TrmE-Era-EngA-EngB-Septin-like GTPase superfamily. EngB GTPase family. The cofactor is Mg(2+).

Its function is as follows. Necessary for normal cell division and for the maintenance of normal septation. This is Probable GTP-binding protein EngB from Ehrlichia chaffeensis (strain ATCC CRL-10679 / Arkansas).